A 368-amino-acid polypeptide reads, in one-letter code: UPF0284 protein Tery_1555 (368 aa).

Belongs to the UPF0284 family.

The sequence is that of UPF0284 protein Tery_1555 from Trichodesmium erythraeum (strain IMS101).